We begin with the raw amino-acid sequence, 510 residues long: RanBP-type and C3HC4-type zinc finger-containing protein 1 (510 aa).

Met-1 is modified (N-acetylmethionine). Positions 1–220 (MDEKTKKAEE…PGCEMCCRAR (220 aa)) are interaction with IRF3. Positions 1–270 (MDEKTKKAEE…NYLQHVQLDQ (270 aa)) are interaction with TAB2. Ser-50 carries the phosphoserine modification. Residues 55–119 (IRLWVSVEDA…DQETLHSHGV (65 aa)) enclose the Ubiquitin-like domain. Residues 69–131 (VTIWLTVRPD…NGDSAYLYLL (63 aa)) form an interaction with RNF31 region. Residues 160-192 (LTLQPRGPLEPGPPKPGVPQEPGRGQPDAVPEP) are disordered. Over residues 167-178 (PLEPGPPKPGVP) the composition is skewed to pro residues. A RanBP2-type zinc finger spans residues 193 to 222 (PPVGWQCPGCTFINKPTRPGCEMCCRARPE). A coiled-coil region spans residues 233–261 (DEEERARLAGEEEALRQYQQRKQQQQEGN). A TRIAD supradomain region spans residues 278–506 (EPAECPVCYS…VNGIPCHPSC (229 aa)). Cys-282, Cys-285, Cys-300, His-302, Cys-305, Cys-308, and Cys-323 together coordinate Zn(2+). An RING-type 1 zinc finger spans residues 282–332 (CPVCYSVLAPGEAVVLRECLHTFCRECLQGTIRNSQEAEVSCPFIDNTYSC). Tyr-330 carries the phosphotyrosine modification. Zn(2+)-binding residues include Cys-332, Cys-371, Cys-376, Cys-391, Cys-394, Cys-399, Cys-402, His-406, Cys-411, Cys-447, and Cys-450. The IBR-type zinc-finger motif lies at 351 to 411 (QRFLDLGISI…CKAIHEQMNC (61 aa)). The RING-type 2; atypical zinc-finger motif lies at 447–476 (CPQCQIVVQKKDGCDWIRCTVCHTEICWVT). The active site involves Cys-460. Cys-465 and Cys-468 together coordinate Zn(2+).

The protein belongs to the RBR family. Component of the LUBAC complex (linear ubiquitin chain assembly complex) which consists of SHARPIN, RBCK1 and RNF31. LUBAC has a MW of approximately 600 kDa suggesting a heteromultimeric assembly of its subunits. Interacts with beta-I-type (PRKCB1) and zeta-type protein kinase C (PRKCZ). Interacts with UBE2L3. Interacts with PRKCH. Associates with the TNF-R1 signaling complex (TNF-RSC) in a stimulation-dependent manner. Interacts with EYA1, TAB2, TAB3, MAP3K7 TRAF6 and RIPK1. Interacts with IRF3. In terms of assembly, interacts with IREB2 only in iron-rich conditions. As to quaternary structure, (Microbial infection) Interacts with hepatitis B virus/HBV protein HBx; this interaction is required to activate transcription of the viral genome. In terms of processing, auto-ubiquitinated. Auto-ubiquitination leads to degradation by the proteasome. Post-translationally, phosphorylated. In vitro, phosphorylation inhibits auto-ubiquitination activity. (Microbial infection) Ubiquitinated by S.flexneri E3 ubiquitin-protein ligases IpaH1.4 and IpaH2.5, leading to its degradation by the proteasome, thereby preventing formation of the bacterial ubiquitin coat and activation of innate immunity.

It carries out the reaction [E2 ubiquitin-conjugating enzyme]-S-ubiquitinyl-L-cysteine + [acceptor protein]-L-lysine = [E2 ubiquitin-conjugating enzyme]-L-cysteine + [acceptor protein]-N(6)-ubiquitinyl-L-lysine.. It participates in protein modification; protein ubiquitination. In terms of biological role, E3 ubiquitin-protein ligase, which accepts ubiquitin from specific E2 ubiquitin-conjugating enzymes, such as UBE2L3/UBCM4, and then transfers it to substrates. Functions as an E3 ligase for oxidized IREB2 and both heme and oxygen are necessary for IREB2 ubiquitination. Promotes ubiquitination of TAB2 and IRF3 and their degradation by the proteasome. Component of the LUBAC complex which conjugates linear ('Met-1'-linked) polyubiquitin chains to substrates and plays a key role in NF-kappa-B activation and regulation of inflammation. LUBAC conjugates linear polyubiquitin to IKBKG and RIPK1 and is involved in activation of the canonical NF-kappa-B and the JNK signaling pathways. Linear ubiquitination mediated by the LUBAC complex interferes with TNF-induced cell death and thereby prevents inflammation. LUBAC is recruited to the TNF-R1 signaling complex (TNF-RSC) following polyubiquitination of TNF-RSC components by BIRC2 and/or BIRC3 and to conjugate linear polyubiquitin to IKBKG and possibly other components contributing to the stability of the complex. The LUBAC complex is also involved in innate immunity by conjugating linear polyubiquitin chains at the surface of bacteria invading the cytosol to form the ubiquitin coat surrounding bacteria. LUBAC is not able to initiate formation of the bacterial ubiquitin coat, and can only promote formation of linear polyubiquitins on pre-existing ubiquitin. The bacterial ubiquitin coat acts as an 'eat-me' signal for xenophagy and promotes NF-kappa-B activation. Together with OTULIN, the LUBAC complex regulates the canonical Wnt signaling during angiogenesis. Binds polyubiquitin of different linkage types. The chain is RanBP-type and C3HC4-type zinc finger-containing protein 1 (RBCK1) from Homo sapiens (Human).